The chain runs to 124 residues: Small ribosomal subunit protein uS12 (124 aa).

D89 carries the 3-methylthioaspartic acid modification. The tract at residues 105-124 (QGVKNRKQARSRYGAKKEKS) is disordered. Over residues 108-118 (KNRKQARSRYG) the composition is skewed to basic residues.

It belongs to the universal ribosomal protein uS12 family. In terms of assembly, part of the 30S ribosomal subunit. Contacts proteins S8 and S17. May interact with IF1 in the 30S initiation complex.

With S4 and S5 plays an important role in translational accuracy. In terms of biological role, interacts with and stabilizes bases of the 16S rRNA that are involved in tRNA selection in the A site and with the mRNA backbone. Located at the interface of the 30S and 50S subunits, it traverses the body of the 30S subunit contacting proteins on the other side and probably holding the rRNA structure together. The combined cluster of proteins S8, S12 and S17 appears to hold together the shoulder and platform of the 30S subunit. The sequence is that of Small ribosomal subunit protein uS12 from Mycobacteroides abscessus (strain ATCC 19977 / DSM 44196 / CCUG 20993 / CIP 104536 / JCM 13569 / NCTC 13031 / TMC 1543 / L948) (Mycobacterium abscessus).